The chain runs to 227 residues: Ribonuclease 3 (227 aa).

In terms of domain architecture, RNase III spans 3–130; it reads TNAISKIIKY…LIGAIYLDGG (128 aa). Glutamate 43 is a binding site for Mg(2+). Aspartate 47 is a catalytic residue. Mg(2+)-binding residues include asparagine 116 and glutamate 119. Residue glutamate 119 is part of the active site. Positions 155–224 constitute a DRBM domain; the sequence is DAKTILQEWA…ASLMLAKINY (70 aa).

This sequence belongs to the ribonuclease III family. As to quaternary structure, homodimer. The cofactor is Mg(2+).

It is found in the cytoplasm. It catalyses the reaction Endonucleolytic cleavage to 5'-phosphomonoester.. Functionally, digests double-stranded RNA. Involved in the processing of primary rRNA transcript to yield the immediate precursors to the large and small rRNAs (23S and 16S). Processes some mRNAs, and tRNAs when they are encoded in the rRNA operon. Processes pre-crRNA and tracrRNA of type II CRISPR loci if present in the organism. The polypeptide is Ribonuclease 3 (Ehrlichia ruminantium (strain Gardel)).